The sequence spans 203 residues: Histidine biosynthesis bifunctional protein HisIE (203 aa).

The tract at residues 1 to 114 (MLTEQQRREL…FGDTAHQWLF (114 aa)) is phosphoribosyl-AMP cyclohydrolase. The segment at 115 to 203 (LYQLEQLLAE…VIENLRKRHQ (89 aa)) is phosphoribosyl-ATP pyrophosphohydrolase.

In the N-terminal section; belongs to the PRA-CH family. The protein in the C-terminal section; belongs to the PRA-PH family.

The protein resides in the cytoplasm. It carries out the reaction 1-(5-phospho-beta-D-ribosyl)-ATP + H2O = 1-(5-phospho-beta-D-ribosyl)-5'-AMP + diphosphate + H(+). The enzyme catalyses 1-(5-phospho-beta-D-ribosyl)-5'-AMP + H2O = 1-(5-phospho-beta-D-ribosyl)-5-[(5-phospho-beta-D-ribosylamino)methylideneamino]imidazole-4-carboxamide. Its pathway is amino-acid biosynthesis; L-histidine biosynthesis; L-histidine from 5-phospho-alpha-D-ribose 1-diphosphate: step 2/9. It functions in the pathway amino-acid biosynthesis; L-histidine biosynthesis; L-histidine from 5-phospho-alpha-D-ribose 1-diphosphate: step 3/9. This Escherichia coli (strain K12) protein is Histidine biosynthesis bifunctional protein HisIE (hisI).